The chain runs to 269 residues: Phosphatidylglycerol--prolipoprotein diacylglyceryl transferase (269 aa).

7 consecutive transmembrane segments (helical) span residues 17-37 (IGPIAIRWYALAYIAGLMLGW), 59-79 (FLVWATMGVVLGGRLGYVLFY), 95-115 (WQGGMSFHGGALGVIVGIIAF), 123-143 (LFQVGDVICCAVPIGLFFGRI), 181-201 (AGLEGAVLFLVLFGLWRLTGI), 206-226 (GALSGVFLAGYGLARIASEFF), and 242-262 (MGQLLSIPQVLVGLALLAWAL). Arg-142 contributes to the a 1,2-diacyl-sn-glycero-3-phospho-(1'-sn-glycerol) binding site.

It belongs to the Lgt family.

It is found in the cell inner membrane. It catalyses the reaction L-cysteinyl-[prolipoprotein] + a 1,2-diacyl-sn-glycero-3-phospho-(1'-sn-glycerol) = an S-1,2-diacyl-sn-glyceryl-L-cysteinyl-[prolipoprotein] + sn-glycerol 1-phosphate + H(+). It functions in the pathway protein modification; lipoprotein biosynthesis (diacylglyceryl transfer). Its function is as follows. Catalyzes the transfer of the diacylglyceryl group from phosphatidylglycerol to the sulfhydryl group of the N-terminal cysteine of a prolipoprotein, the first step in the formation of mature lipoproteins. The chain is Phosphatidylglycerol--prolipoprotein diacylglyceryl transferase from Paramagnetospirillum magneticum (strain ATCC 700264 / AMB-1) (Magnetospirillum magneticum).